Consider the following 439-residue polypeptide: Xylose isomerase (439 aa).

Catalysis depends on residues His101 and Asp104. Mg(2+) is bound by residues Glu232, Glu268, His271, Asp296, Asp307, Asp309, and Asp339.

This sequence belongs to the xylose isomerase family. Homotetramer. Mg(2+) serves as cofactor.

The protein resides in the cytoplasm. It carries out the reaction alpha-D-xylose = alpha-D-xylulofuranose. The polypeptide is Xylose isomerase (Yersinia pestis bv. Antiqua (strain Angola)).